The primary structure comprises 1704 residues: MSTNNIIEGDEDTKTTITNESNTDNNNNNNDDNKNNTENTTSPTNNNNTNDNDNNSDNNNNKNNNNNNSQVTEEQQVTLEDSGSEDDINFEEHELSDSAEEDEDEMEDDDEDADGRQNQNPNSAGGKRRGRPSKVQQSTNTHLSQTTPESPTIFTPDGKVPKRISTSTNNTPNTQSALKTNKRPRLTSDEEKDLMLSEESDGGVGEDDDSIMSTNDKPQDENQSNQNQNNNNNNNNNTTTTTTTTNNSNNNNQNLNQNNNNNNNNNNINNNNNNNNSNNDNNNNNNRPARGRPKTNGSRSEERKRIQLQQYIQATQGSSTTTSDPNNQNNQINQINQNNQNNQNNQNNQNNSLGEEEFGEEFEEEEEDMGQPKKKTKYKTSKKSVPNHLDIRPCWFVGCVKADRSLKILRPCLIPTCKTHAIKSEVRISEALRRGDFVNDESSGVKDKVCGICGDKKDLHHCGNNGCAFGFCNDCVEIAAMKHNNHPNGNKWICWVCQFVRTKAKEKERTRWVKEQLNPGLTSISRKFRRGPELDMAQAQFLQQQQQQQTSPNEKRSSQFNSNNSNNNNNNNSNNNNNNSGFDPSGSPNNQQNQKRLRKKINASSDIYETRKYTKKRNDEDSAPPSPTSIIGNSVMVGSSGAAGGGIIKNTTVVVEQQGYSATPPSPNTLMVQQQQQLQQTHQQARLSQQQAQLQQLKALQQQHQHQQQNNGNFNNLIESVLSPNREPLNPIDNFVDQTFTAVKFFSTLSQNPPDEIKERIDNFVDLMMRIKTVRWASDYGLVWRMIEELSNLIKRNLLSSQSVVEMYSELKSLEEGALENMTTNARNVPLERAITMVFENHETAGLIGKECCSTRNALIYSIEVALRAIADYQHDLEDNLMEESLRSNKVSTEIEQIEHQIKANLDEIHKFKYQEVELLDSLSKVRGAIAAHESIRDTLQKKSSELKVDMLLIKNGISDKEKETKSQQATLENEIYALKLLITMVESIYWIHDYFYESRVGECEKLINNKLSQLQNKLETQIPHPPNALDNAIPNTTTTVMGEDGQPVIVPTTVDIKNKFKTIAIYHKICMQHKVPNFHLEKPDRIQVAVSCINEFASNPLVDIFDNPPEVDMRYVMAVHDANYIKKLETSLPPENSEFETHLESDKSGAMVTVASHKDFEGDDDNIYDTFVSHRSIKAALRASGSVCAAVDSVSRSGYTRAFCAIRPPGHHAGRYGRTSDAPSQGYCLINNVAIGAKYASLTAGYSRIAVVDFDVHHGNGTQEILSGDDNFLFISIHVCDEKRYFYPGTGQDVGDIDEVSGQFDGNILNIGLKRNTGSAVFLQQWMNKIIPRLEAYKPQLIFLSAGFDGHKDDPTNGLKLNEEDYFVITKMIKTVAFKYCKGRIISVLEGGYGIEKTNSLQRCVNSHLKALIEDTDEEIHLANISYGHFSETQETAIPKFNINNFISNPNKRGKKNNLNTINFINNNMNNINNNITNSLSNKQLERQKQLQQQQQQAQQAQQQQSPQQSQTIENTSITTTTTTTSTTTTLSTSDSESNNNINNNNNDYNNNNNNNSNNNNNNSNNNQPTNFNSSTSSPILSGNNNNNNNNNNNNNNNNINNNNNNNSNNNNNMNTSNPTNQQSSVIISDDMDDVQTNSNPPNPQYPLSPNSVNRGNNPSNISMSGAQRSAPLIISPKPSNSPNSPSTSNNNGTPQNINNSDN.

3 disordered regions span residues 1–303 (MSTN…SEER), 315–383 (TQGS…TSKK), and 540–634 (QFLQ…IGNS). Low complexity predominate over residues 15–69 (TTITNESNTDNNNNNNDDNKNNTENTTSPTNNNNTNDNDNNSDNNNNKNNNNNNS). The span at 70–81 (QVTEEQQVTLED) shows a compositional bias: polar residues. The span at 97–113 (DSAEEDEDEMEDDDEDA) shows a compositional bias: acidic residues. A compositionally biased stretch (polar residues) spans 134-153 (KVQQSTNTHLSQTTPESPTI). Residues 165–176 (STSTNNTPNTQS) are compositionally biased toward low complexity. Residues 186-195 (LTSDEEKDLM) show a composition bias toward basic and acidic residues. Over residues 196-210 (LSEESDGGVGEDDDS) the composition is skewed to acidic residues. Residues 222 to 286 (NQSNQNQNNN…SNNDNNNNNN (65 aa)) are compositionally biased toward low complexity. Residues 315–325 (TQGSSTTTSDP) are compositionally biased toward polar residues. Residues 326–351 (NNQNNQINQINQNNQNNQNNQNNQNN) are compositionally biased toward low complexity. Positions 354–369 (GEEEFGEEFEEEEEDM) are enriched in acidic residues. Over residues 372 to 382 (PKKKTKYKTSK) the composition is skewed to basic residues. Low complexity-rich tracts occupy residues 540–549 (QFLQQQQQQQ) and 561–580 (NSNN…NNNS). Basic and acidic residues predominate over residues 608 to 620 (YETRKYTKKRNDE). Substrate-binding residues include Asp-1165 and Gly-1227. A divalent metal cation-binding residues include Asp-1256, His-1258, and Asp-1350. Residues 1485-1704 (QLERQKQLQQ…TPQNINNSDN (220 aa)) are disordered. Residues 1491–1616 (QLQQQQQQAQ…NNSNNNNNMN (126 aa)) show a composition bias toward low complexity. The segment covering 1649–1669 (LSPNSVNRGNNPSNISMSGAQ) has biased composition (polar residues). Over residues 1677–1698 (SPKPSNSPNSPSTSNNNGTPQN) the composition is skewed to low complexity.

It belongs to the histone deacetylase family. HD type 2 subfamily.

The protein localises to the nucleus. The protein resides in the cytoplasm. It catalyses the reaction N(6)-acetyl-L-lysyl-[histone] + H2O = L-lysyl-[histone] + acetate. Functionally, responsible for the deacetylation of lysine residues on the N-terminal part of the core histones (H2A, H2B, H3 and H4). Histone deacetylation plays an important role in transcriptional regulation, cell cycle progression and developmental events. Histone deacetylases act via the formation of large multiprotein complexes. This Dictyostelium discoideum (Social amoeba) protein is Type-2 histone deacetylase 2 (hdaC).